The following is a 262-amino-acid chain: Small ribosomal subunit protein eS4 (262 aa).

The S4 RNA-binding domain maps to 42–105 (LPLVVFLRNR…NEHFRLVYDV (64 aa)). Residues 178 to 211 (GRLVMVTGGRNLGRVGVIVHREKHEGGFDLVHIK) enclose the KOW domain.

The protein belongs to the eukaryotic ribosomal protein eS4 family. In terms of assembly, component of the small ribosomal subunit. Mature ribosomes consist of a small (40S) and a large (60S) subunit. The 40S subunit contains about 32 different proteins and 1 molecule of RNA (18S). The 60S subunit contains 45 different proteins and 3 molecules of RNA (25S, 5.8S and 5S).

It localises to the cytoplasm. Component of the ribosome, a large ribonucleoprotein complex responsible for the synthesis of proteins in the cell. The small ribosomal subunit (SSU) binds messenger RNAs (mRNAs) and translates the encoded message by selecting cognate aminoacyl-transfer RNA (tRNA) molecules. The large subunit (LSU) contains the ribosomal catalytic site termed the peptidyl transferase center (PTC), which catalyzes the formation of peptide bonds, thereby polymerizing the amino acids delivered by tRNAs into a polypeptide chain. The nascent polypeptides leave the ribosome through a tunnel in the LSU and interact with protein factors that function in enzymatic processing, targeting, and the membrane insertion of nascent chains at the exit of the ribosomal tunnel. The protein is Small ribosomal subunit protein eS4 (RPS42) of Candida albicans (strain SC5314 / ATCC MYA-2876) (Yeast).